Here is a 284-residue protein sequence, read N- to C-terminus: Diaminopimelate epimerase (284 aa).

The substrate site is built by Asn-13 and Asn-70. Residue Cys-79 is the Proton donor of the active site. Substrate contacts are provided by residues Gly-80–Asn-81, Asn-167, Asn-200, and Glu-218–Arg-219. The Proton acceptor role is filled by Cys-227. Gly-228–Thr-229 contributes to the substrate binding site.

Belongs to the diaminopimelate epimerase family. In terms of assembly, homodimer.

The protein resides in the cytoplasm. It carries out the reaction (2S,6S)-2,6-diaminopimelate = meso-2,6-diaminopimelate. It participates in amino-acid biosynthesis; L-lysine biosynthesis via DAP pathway; DL-2,6-diaminopimelate from LL-2,6-diaminopimelate: step 1/1. Its function is as follows. Catalyzes the stereoinversion of LL-2,6-diaminopimelate (L,L-DAP) to meso-diaminopimelate (meso-DAP), a precursor of L-lysine and an essential component of the bacterial peptidoglycan. This Prochlorococcus marinus (strain NATL1A) protein is Diaminopimelate epimerase.